The primary structure comprises 78 residues: Putative membrane protein insertion efficiency factor (78 aa).

Belongs to the UPF0161 family.

The protein localises to the cell membrane. Functionally, could be involved in insertion of integral membrane proteins into the membrane. The polypeptide is Putative membrane protein insertion efficiency factor (Bacillus anthracis (strain A0248)).